The following is a 183-amino-acid chain: Bifunctional protein PyrR (183 aa).

Positions 98-110 match the PRPP-binding motif; sequence VVLVDDVLYTGRT.

Belongs to the purine/pyrimidine phosphoribosyltransferase family. PyrR subfamily.

It carries out the reaction UMP + diphosphate = 5-phospho-alpha-D-ribose 1-diphosphate + uracil. Functionally, regulates the transcription of the pyrimidine nucleotide (pyr) operon in response to exogenous pyrimidines. In terms of biological role, also displays a weak uracil phosphoribosyltransferase activity which is not physiologically significant. This is Bifunctional protein PyrR from Roseiflexus sp. (strain RS-1).